A 26-amino-acid polypeptide reads, in one-letter code: M-lycotoxin-Ls2a (26 aa).

In terms of tissue distribution, expressed by the venom gland.

It localises to the secreted. The protein resides in the target cell membrane. In terms of biological role, forms pore that permeabilize the cell membrane. Promotes efflux of calcium from synaptosomes, causes hemolysis, and dissipates voltage gradients across muscle membrane. Potently inhibits the growth of bacteria and yeast. May function both in the prey capture strategy as well as protection from infectious organisms arising from prey ingestion. The chain is M-lycotoxin-Ls2a from Lycosa singoriensis (Wolf spider).